Here is a 474-residue protein sequence, read N- to C-terminus: 3-isopropylmalate dehydratase large subunit (474 aa).

Residues cysteine 353, cysteine 414, and cysteine 417 each contribute to the [4Fe-4S] cluster site.

The protein belongs to the aconitase/IPM isomerase family. LeuC type 1 subfamily. Heterodimer of LeuC and LeuD. The cofactor is [4Fe-4S] cluster.

It catalyses the reaction (2R,3S)-3-isopropylmalate = (2S)-2-isopropylmalate. Its pathway is amino-acid biosynthesis; L-leucine biosynthesis; L-leucine from 3-methyl-2-oxobutanoate: step 2/4. In terms of biological role, catalyzes the isomerization between 2-isopropylmalate and 3-isopropylmalate, via the formation of 2-isopropylmaleate. The sequence is that of 3-isopropylmalate dehydratase large subunit from Pseudomonas paraeruginosa (strain DSM 24068 / PA7) (Pseudomonas aeruginosa (strain PA7)).